We begin with the raw amino-acid sequence, 149 residues long: Large ribosomal subunit protein uL24 (149 aa).

The protein belongs to the universal ribosomal protein uL24 family. In terms of assembly, part of the 50S ribosomal subunit.

In terms of biological role, one of two assembly initiator proteins, it binds directly to the 5'-end of the 23S rRNA, where it nucleates assembly of the 50S subunit. One of the proteins that surrounds the polypeptide exit tunnel on the outside of the subunit. This chain is Large ribosomal subunit protein uL24, found in Nostoc sp. (strain PCC 7120 / SAG 25.82 / UTEX 2576).